The chain runs to 352 residues: Delta(7)-sterol 5(6)-desaturas erg3A (352 aa).

N-linked (GlcNAc...) asparagine glycosylation occurs at Asn39. 3 helical membrane passes run 82-102 (FLSFFLIVWIFGIIVYFISAT), 128-147 (IAQTMRSMPVMSLLTAPFLV), and 167-187 (YYSILQFPLFIAFTDFCIYWI). In terms of domain architecture, Fatty acid hydroxylase spans 174–299 (PLFIAFTDFC…FTTLWDRLGG (126 aa)). A Histidine box-1 motif is present at residues 188-192 (HRGLH). A Histidine box-2 motif is present at residues 201-205 (HKPHH). Residues 231–251 (HVFPFIFPLQKLAYVFLFGFI) traverse the membrane as a helical segment. Residues 276-280 (HTMHH) carry the Histidine box-3 motif.

It belongs to the sterol desaturase family. It depends on Fe cation as a cofactor.

Its subcellular location is the endoplasmic reticulum membrane. Functionally, delta(7)-sterol 5(6)-desaturase; part of the third module of ergosterol biosynthesis pathway that includes the late steps of the pathway. Erg3A is a minor delta(7)-sterol 5(6)-desaturase within the ergosterol pathway, erg3B being the major one. The third module or late pathway involves the ergosterol synthesis itself through consecutive reactions that mainly occur in the endoplasmic reticulum (ER) membrane. Firstly, the squalene synthase erg9 catalyzes the condensation of 2 farnesyl pyrophosphate moieties to form squalene, which is the precursor of all steroids. Squalene synthase is crucial for balancing the incorporation of farnesyl diphosphate (FPP) into sterol and nonsterol isoprene synthesis. Secondly, squalene is converted into lanosterol by the consecutive action of the squalene epoxidase erg1 and the lanosterol synthase erg7. Then, the delta(24)-sterol C-methyltransferase erg6 methylates lanosterol at C-24 to produce eburicol. Eburicol is the substrate of the sterol 14-alpha demethylase encoded by cyp51A and cyp51B, to yield 4,4,24-trimethyl ergosta-8,14,24(28)-trienol. The C-14 reductase erg24 then reduces the C14=C15 double bond which leads to 4,4-dimethylfecosterol. A sequence of further demethylations at C-4, involving the C-4 demethylation complex containing the C-4 methylsterol oxidases erg25A or erg25B, the sterol-4-alpha-carboxylate 3-dehydrogenase erg26 and the 3-keto-steroid reductase erg27, leads to the production of fecosterol via 4-methylfecosterol. The C-8 sterol isomerase erg2 then catalyzes the reaction which results in unsaturation at C-7 in the B ring of sterols and thus converts fecosterol to episterol. The sterol-C5-desaturase erg3B then catalyzes the introduction of a C-5 double bond in the B ring to produce 5-dehydroepisterol. The 2 other sterol-C5-desaturases, erg3A and erg3C, seem to be less important in ergosterol biosynthesis. The C-22 sterol desaturase erg5 further converts 5-dehydroepisterol into ergosta-5,7,22,24(28)-tetraen-3beta-ol by forming the C-22(23) double bond in the sterol side chain. Finally, ergosta-5,7,22,24(28)-tetraen-3beta-ol is substrate of the C-24(28) sterol reductases erg4A and erg4B to produce ergosterol. Possible alternative sterol biosynthetic pathways might exist from fecosterol to ergosterol, depending on the activities of the erg3 isoforms. The protein is Delta(7)-sterol 5(6)-desaturas erg3A of Aspergillus fumigatus (strain ATCC MYA-4609 / CBS 101355 / FGSC A1100 / Af293) (Neosartorya fumigata).